Reading from the N-terminus, the 148-residue chain is Protein ADM2 (148 aa).

Residues 1–24 (MARIPTAALGCISLLCLQLPGSLS) form the signal peptide. Residues 25–98 (RSLGGDPRPV…HSGPRRHSGP (74 aa)) constitute a propeptide that is removed on maturation. 2 disordered regions span residues 26–57 (SLGGDPRPVKPREPPARSPSSSLQPRHPAPRP) and 70–101 (RGAGLAPVMGQPLRDGGRQHSGPRRHSGPRRT). A disulfide bond links C110 and C115. Y147 carries the tyrosine amide modification.

This sequence belongs to the adrenomedullin family. As to expression, expressed in the esophagus, stomach, jejunum, ileum, ileocecum, ascending colon, transverse colon, descending colon and rectum. Expressed in myocardial cells of the heart, renal tubular cells, hypothalamus, and pituitary.

Its subcellular location is the secreted. Its function is as follows. Intermedin/ADM2 is a peptide hormone that plays a role as physiological regulator of gastrointestinal and cardiovascular bioactivities mediated by the CALCRL-RAMPs receptor complexes. Activates the cAMP-dependent pathway through interaction with CALCRL-RAMP3 receptor complex. The polypeptide is Protein ADM2 (Homo sapiens (Human)).